Here is a 206-residue protein sequence, read N- to C-terminus: N-(5'-phosphoribosyl)anthranilate isomerase (206 aa).

It belongs to the TrpF family.

It carries out the reaction N-(5-phospho-beta-D-ribosyl)anthranilate = 1-(2-carboxyphenylamino)-1-deoxy-D-ribulose 5-phosphate. It participates in amino-acid biosynthesis; L-tryptophan biosynthesis; L-tryptophan from chorismate: step 3/5. The chain is N-(5'-phosphoribosyl)anthranilate isomerase from Pseudomonas syringae pv. syringae (strain B728a).